We begin with the raw amino-acid sequence, 224 residues long: MALLISLPGGTPAMAQVLLLLSSGCLHAGNSERYNRKNGFGVNQPERCSGVQGGSIDIPFSFYFPWKLAKDPQMSIAWKWKDFHGEVIYNSSLPFIHEHFKGRLILNWTQGQTSGVLRILNLKESDQAQYFSRVNLQSTEGMKLWQSIPGTQLNVTQALNTTMRSPFIVTSEFTTAGLEHTSDQRNPSLMNLGAMVTMLLAKVLVIVLVYGWMIFLRWKQRPAH.

Residues 1–28 (MALLISLPGGTPAMAQVLLLLSSGCLHA) form the signal peptide. At 29 to 195 (GNSERYNRKN…NPSLMNLGAM (167 aa)) the chain is on the extracellular side. N90, N107, and N154 each carry an N-linked (GlcNAc...) asparagine glycan. The helical transmembrane segment at 196–216 (VTMLLAKVLVIVLVYGWMIFL) threads the bilayer. Residues 217–224 (RWKQRPAH) are Cytoplasmic-facing.

In terms of assembly, interacts with CD99. Probably associates with DAP12. As to expression, widely expressed with highest levels in spleen, liver and lung. Predominantly expressed by natural killer cells, macrophages, and granulocytes and dendritic cells (BM-DC).

The protein localises to the membrane. Its function is as follows. Paired receptors consist of highly related activating and inhibitory receptors and are widely involved in the regulation of the immune system. PILRB is thought to act as a cellular signaling activating receptor that associates with ITAM-bearing adapter molecules on the cell surface. Seems to associate with DAP12 and is a receptor for CD99. May be involved in target cell recognition by natural killer cells and in activation of dendritic cells. The sequence is that of Paired immunoglobulin-like type 2 receptor beta (Pilrb) from Mus musculus (Mouse).